The chain runs to 1261 residues: AT-rich interactive domain-containing protein 4A (1261 aa).

The interval 4–121 is DNA-binding; sequence ADEPAYLTVG…RHFAESETLD (118 aa). Disordered regions lie at residues 142–169, 273–310, and 435–470; these read RGRRSSLPITEDEKEEESSEEEDEDKRR, ESSSSDDEECPAEEHEEEKEKEAKKEEEELPEEELDPE, and APEMPLLDVKSEPEENTDSNSESDREDTELKSPRGR. Acidic residues-rich tracts occupy residues 151–165 and 276–289; these read TEDEKEEESSEEEDE and SSDDEECPAEEHEE. A compositionally biased stretch (basic and acidic residues) spans 290-299; it reads EKEKEAKKEE. Residues 300-310 are compositionally biased toward acidic residues; that stretch reads EELPEEELDPE. The ARID domain occupies 309 to 401; it reads PEERDNFLQQ…YLYGFEEYCR (93 aa). A Glycyl lysine isopeptide (Lys-Gly) (interchain with G-Cter in SUMO2) cross-link involves residue K481. Disordered regions lie at residues 498 to 582, 633 to 768, and 842 to 953; these read LENK…GTKV, WPLD…EAGD, and FSST…EDAM. Over residues 512 to 522 the composition is skewed to basic and acidic residues; it reads PAAKREHELLF. Positions 526–536 are enriched in basic residues; the sequence is STPKNKEKKIK. A compositionally biased stretch (acidic residues) spans 541-551; it reads SERDSDEEEEK. Over residues 552 to 564 the composition is skewed to basic and acidic residues; the sequence is SQEREETESRCDS. Positions 565–574 are enriched in acidic residues; the sequence is EGEDEEDDTE. In terms of domain architecture, Tudor-knot spans 579-631; sequence GTKVKVKYGRGKTQKIYEASIKSTEMDDGEILYLVHYYGWNVRYDEWVKADRI. Residues 640 to 649 are compositionally biased toward basic residues; that stretch reads PKKKQKKKVK. Basic and acidic residues predominate over residues 650 to 665; that stretch reads NKEDSEKDEKRDEERQ. A compositionally biased stretch (polar residues) spans 676-689; the sequence is STFSPNMPYSLSKT. Residue S679 is modified to Phosphoserine. The span at 690 to 702 shows a compositional bias: low complexity; the sequence is SNSEGKSDSCSSD. Residues 708-753 show a composition bias toward basic and acidic residues; sequence QLEKSSGGEDLSPDVKEELEKNENAHDDKLDEENPKIVHISKENDR. S719 bears the Phosphoserine mark. Glycyl lysine isopeptide (Lys-Gly) (interchain with G-Cter in SUMO2) cross-links involve residues K723 and K743. S867 is subject to Phosphoserine. Composition is skewed to basic and acidic residues over residues 899 to 909 and 929 to 947; these read KGAHVEQHFET and TSEKSDSPAEEEPVHTPLK. Positions 955–968 are retinoblastoma protein binding; that stretch reads LIGPETLVCHEVDL. A compositionally biased stretch (basic and acidic residues) spans 1067-1080; that stretch reads HERESREKGQKRPS. 2 disordered regions span residues 1067–1173 and 1216–1261; these read HERE…RTYK and RRRK…VECR. S1113 and S1149 each carry phosphoserine. The segment covering 1230–1252 has biased composition (low complexity); it reads HAGASMSSASSDTGMSPSSSSPP.

Identified in mSin3A corepressor complexes together with SIN3A, SIN3B, RBBP4, RBBP7, SAP30, BRMS1, HDAC1 and HDAC2. Interacts with BRMS1. Interacts with RB1. Interacts with ARID4B. Interacts with AR. As to expression, expressed in Sertoli cells of the testis.

The protein resides in the nucleus. Functionally, DNA-binding protein which modulates activity of several transcription factors including RB1 (retinoblastoma-associated protein) and AR (androgen receptor). May function as part of an mSin3A repressor complex. Has no intrinsic transcriptional activity. Plays a role in the regulation of epigenetic modifications at the PWS/AS imprinting center near the SNRPN promoter, where it might function as part of a complex with RB1 and ARID4B. Involved in spermatogenesis, together with ARID4B, where it acts as a transcriptional coactivator for AR and enhances expression of genes required for sperm maturation. Regulates expression of the tight junction protein CLDN3 in the testis, which is important for integrity of the blood-testis barrier. Plays a role in myeloid homeostasis where it regulates the histone methylation state of bone marrow cells and expression of various genes involved in hematopoiesis. May function as a leukemia suppressor. This chain is AT-rich interactive domain-containing protein 4A, found in Mus musculus (Mouse).